The following is a 242-amino-acid chain: Synaptonemal complex central element protein 1-like (242 aa).

Residues 1-24 are disordered; that stretch reads MAGKLKPLNVEAPEATEEAEGQAK. Positions 44–181 form a coiled coil; the sequence is LEPQIEDLIS…LREVERRLHS (138 aa). The interval 206-242 is disordered; it reads VRSAPEVGAGEGEAGPELPRARDEEDPEPPVAAPDAL.

The protein belongs to the SYCE family.

In terms of biological role, may be involved in meiosis. This is Synaptonemal complex central element protein 1-like (SYCE1L) from Homo sapiens (Human).